We begin with the raw amino-acid sequence, 379 residues long: uncharacterized protein (379 aa).

Disordered stretches follow at residues 1–25 (MASDWRRQSTSRGIPNEGQNDEKGK), 128–158 (QGKTTSATTSNSTIRGKPSFGRENSAKIERT), and 355–379 (TEKTSILSPRRRQKRMRSLSSQGDI). Over residues 128 to 141 (QGKTTSATTSNSTI) the composition is skewed to polar residues.

This is an uncharacterized protein from Caenorhabditis elegans.